Consider the following 1052-residue polypeptide: Mediator of RNA polymerase II transcription subunit 5 (1052 aa).

Residues 949–982 (GGDDEQREQHQQQQPDADQSNQGVVAPTGNTPGN) are disordered. Residues 959-970 (QQQQPDADQSNQ) are compositionally biased toward low complexity.

It belongs to the Mediator complex subunit 5 family. In terms of assembly, component of the Mediator complex.

The protein localises to the nucleus. In terms of biological role, component of the Mediator complex, a coactivator involved in the regulated transcription of nearly all RNA polymerase II-dependent genes. Mediator functions as a bridge to convey information from gene-specific regulatory proteins to the basal RNA polymerase II transcription machinery. Mediator is recruited to promoters by direct interactions with regulatory proteins and serves as a scaffold for the assembly of a functional preinitiation complex with RNA polymerase II and the general transcription factors. This is Mediator of RNA polymerase II transcription subunit 5 (NUT1) from Coccidioides immitis (strain RS) (Valley fever fungus).